Here is a 304-residue protein sequence, read N- to C-terminus: Dihydroorotate dehydrogenase B (NAD(+)), catalytic subunit (304 aa).

FMN contacts are provided by residues Ser-21 and 45 to 46 (KA). Residues Lys-45 and 69 to 73 (NAIGL) contribute to the substrate site. The FMN site is built by Asn-99 and Asn-127. Asn-127 provides a ligand contact to substrate. Cys-130 serves as the catalytic Nucleophile. Lys-165 and Ile-191 together coordinate FMN. 192–193 (NT) provides a ligand contact to substrate. FMN contacts are provided by residues Gly-217, 243 to 244 (GG), and 265 to 266 (GT).

It belongs to the dihydroorotate dehydrogenase family. Type 1 subfamily. Heterotetramer of 2 PyrK and 2 PyrD type B subunits. It depends on FMN as a cofactor.

The protein resides in the cytoplasm. It catalyses the reaction (S)-dihydroorotate + NAD(+) = orotate + NADH + H(+). It participates in pyrimidine metabolism; UMP biosynthesis via de novo pathway; orotate from (S)-dihydroorotate (NAD(+) route): step 1/1. Catalyzes the conversion of dihydroorotate to orotate with NAD(+) as electron acceptor. The polypeptide is Dihydroorotate dehydrogenase B (NAD(+)), catalytic subunit (pyrD) (Listeria monocytogenes serotype 4b (strain F2365)).